A 118-amino-acid chain; its full sequence is Large ribosomal subunit protein bL20 (118 aa).

The protein belongs to the bacterial ribosomal protein bL20 family.

Functionally, binds directly to 23S ribosomal RNA and is necessary for the in vitro assembly process of the 50S ribosomal subunit. It is not involved in the protein synthesizing functions of that subunit. This Aeromonas hydrophila subsp. hydrophila (strain ATCC 7966 / DSM 30187 / BCRC 13018 / CCUG 14551 / JCM 1027 / KCTC 2358 / NCIMB 9240 / NCTC 8049) protein is Large ribosomal subunit protein bL20.